A 167-amino-acid chain; its full sequence is MFDFSFPTPASAGTRMGPASCGGRSLHLPQLRFSRVDATAVTDVPFQRMHAPHRAPEVFCSRSSRGAGRGHPTPTPRVRWALAGNQPRCCAQLLSGRGGSGAQLRAGWVRGAAVGNLFILLLGKEDGEEEGTVLSYSSMVHISNITGIVGTTVSRTKPALVLMELTF.

Residues 1–21 (MFDFSFPTPASAGTRMGPASC) are disordered.

This is an uncharacterized protein from Homo sapiens (Human).